A 547-amino-acid polypeptide reads, in one-letter code: Chaperonin GroEL 1 (547 aa).

ATP-binding positions include 30-33 (TLGP), Lys51, 87-91 (DGTTT), Gly415, and Asp496.

The protein belongs to the chaperonin (HSP60) family. Forms a cylinder of 14 subunits composed of two heptameric rings stacked back-to-back. Interacts with the co-chaperonin GroES.

Its subcellular location is the cytoplasm. It carries out the reaction ATP + H2O + a folded polypeptide = ADP + phosphate + an unfolded polypeptide.. Its function is as follows. Together with its co-chaperonin GroES, plays an essential role in assisting protein folding. The GroEL-GroES system forms a nano-cage that allows encapsulation of the non-native substrate proteins and provides a physical environment optimized to promote and accelerate protein folding. This chain is Chaperonin GroEL 1, found in Gluconacetobacter diazotrophicus (strain ATCC 49037 / DSM 5601 / CCUG 37298 / CIP 103539 / LMG 7603 / PAl5).